We begin with the raw amino-acid sequence, 169 residues long: Peptide deformylase (169 aa).

Fe cation-binding residues include cysteine 91 and histidine 133. Glutamate 134 is a catalytic residue. Histidine 137 is a binding site for Fe cation.

The protein belongs to the polypeptide deformylase family. The cofactor is Fe(2+).

The enzyme catalyses N-terminal N-formyl-L-methionyl-[peptide] + H2O = N-terminal L-methionyl-[peptide] + formate. Functionally, removes the formyl group from the N-terminal Met of newly synthesized proteins. Requires at least a dipeptide for an efficient rate of reaction. N-terminal L-methionine is a prerequisite for activity but the enzyme has broad specificity at other positions. The chain is Peptide deformylase from Citrobacter koseri (strain ATCC BAA-895 / CDC 4225-83 / SGSC4696).